Reading from the N-terminus, the 187-residue chain is Protein GrpE (187 aa).

Positions M1–L31 are disordered.

It belongs to the GrpE family. As to quaternary structure, homodimer.

It is found in the cytoplasm. Participates actively in the response to hyperosmotic and heat shock by preventing the aggregation of stress-denatured proteins, in association with DnaK and GrpE. It is the nucleotide exchange factor for DnaK and may function as a thermosensor. Unfolded proteins bind initially to DnaJ; upon interaction with the DnaJ-bound protein, DnaK hydrolyzes its bound ATP, resulting in the formation of a stable complex. GrpE releases ADP from DnaK; ATP binding to DnaK triggers the release of the substrate protein, thus completing the reaction cycle. Several rounds of ATP-dependent interactions between DnaJ, DnaK and GrpE are required for fully efficient folding. This Borrelia garinii subsp. bavariensis (strain ATCC BAA-2496 / DSM 23469 / PBi) (Borreliella bavariensis) protein is Protein GrpE.